Consider the following 61-residue polypeptide: Sperm protamine P1 (61 aa).

The interval 1-61 (MARYRHSRSR…RYSRRRRRRY (61 aa)) is disordered.

This sequence belongs to the protamine P1 family. Testis.

It localises to the nucleus. The protein resides in the chromosome. Functionally, protamines substitute for histones in the chromatin of sperm during the haploid phase of spermatogenesis. They compact sperm DNA into a highly condensed, stable and inactive complex. This Setonix brachyurus (Quokka) protein is Sperm protamine P1 (PRM1).